The chain runs to 158 residues: Ribosomal RNA large subunit methyltransferase H (158 aa).

S-adenosyl-L-methionine is bound by residues L72, G103, and 122–127 (LGNLTL).

It belongs to the RNA methyltransferase RlmH family. Homodimer.

It localises to the cytoplasm. The enzyme catalyses pseudouridine(1915) in 23S rRNA + S-adenosyl-L-methionine = N(3)-methylpseudouridine(1915) in 23S rRNA + S-adenosyl-L-homocysteine + H(+). Its function is as follows. Specifically methylates the pseudouridine at position 1915 (m3Psi1915) in 23S rRNA. The sequence is that of Ribosomal RNA large subunit methyltransferase H from Acidiphilium cryptum (strain JF-5).